We begin with the raw amino-acid sequence, 400 residues long: Tryptophan synthase beta chain (400 aa).

Lys91 carries the N6-(pyridoxal phosphate)lysine modification.

It belongs to the TrpB family. Tetramer of two alpha and two beta chains. It depends on pyridoxal 5'-phosphate as a cofactor.

It catalyses the reaction (1S,2R)-1-C-(indol-3-yl)glycerol 3-phosphate + L-serine = D-glyceraldehyde 3-phosphate + L-tryptophan + H2O. It functions in the pathway amino-acid biosynthesis; L-tryptophan biosynthesis; L-tryptophan from chorismate: step 5/5. Its function is as follows. The beta subunit is responsible for the synthesis of L-tryptophan from indole and L-serine. The chain is Tryptophan synthase beta chain from Listeria monocytogenes serotype 4b (strain CLIP80459).